A 118-amino-acid polypeptide reads, in one-letter code: Hydrogenase maturation factor HypA (118 aa).

H2 lines the Ni(2+) pocket. 4 residues coordinate Zn(2+): C73, C76, C90, and C93.

This sequence belongs to the HypA/HybF family.

In terms of biological role, involved in the maturation of [NiFe] hydrogenases. Required for nickel insertion into the metal center of the hydrogenase. In Salmonella typhi, this protein is Hydrogenase maturation factor HypA.